Here is a 136-residue protein sequence, read N- to C-terminus: ATP synthase epsilon chain (136 aa).

This sequence belongs to the ATPase epsilon chain family. As to quaternary structure, F-type ATPases have 2 components, CF(1) - the catalytic core - and CF(0) - the membrane proton channel. CF(1) has five subunits: alpha(3), beta(3), gamma(1), delta(1), epsilon(1). CF(0) has three main subunits: a, b and c.

The protein resides in the cell inner membrane. Its function is as follows. Produces ATP from ADP in the presence of a proton gradient across the membrane. The protein is ATP synthase epsilon chain of Persephonella marina (strain DSM 14350 / EX-H1).